We begin with the raw amino-acid sequence, 117 residues long: Fluoride-specific ion channel FluC 2 (117 aa).

4 helical membrane passes run 4 to 24 (FLIG…GDII), 31 to 51 (KFPW…GIIT), 59 to 79 (LSMI…TFMY), and 94 to 114 (LIYI…GEFI). 2 residues coordinate Na(+): glycine 69 and threonine 72.

This sequence belongs to the fluoride channel Fluc/FEX (TC 1.A.43) family.

Its subcellular location is the cell membrane. The enzyme catalyses fluoride(in) = fluoride(out). With respect to regulation, na(+) is not transported, but it plays an essential structural role and its presence is essential for fluoride channel function. Its function is as follows. Fluoride-specific ion channel. Important for reducing fluoride concentration in the cell, thus reducing its toxicity. The sequence is that of Fluoride-specific ion channel FluC 2 from Clostridium acetobutylicum (strain ATCC 824 / DSM 792 / JCM 1419 / IAM 19013 / LMG 5710 / NBRC 13948 / NRRL B-527 / VKM B-1787 / 2291 / W).